A 1713-amino-acid chain; its full sequence is uncharacterized protein (1713 aa).

Positions 1 to 12 (MNENEFSTNSLI) are enriched in polar residues. Disordered stretches follow at residues 1 to 35 (MNEN…INFG), 79 to 200 (QQLN…KLSN), 226 to 290 (GNNN…QPLS), 309 to 557 (QYLS…PMSH), 713 to 734 (SNDQ…KKDR), 808 to 952 (SPPM…SITT), and 1143 to 1190 (HHHH…SISR). 5 stretches are compositionally biased toward low complexity: residues 13–35 (NQQG…INFG), 79–109 (QQLN…NNNN), 126–170 (NNSG…NSGN), 177–200 (NMSD…KLSN), and 226–264 (GNNN…GGNN). Residues 265 to 276 (SHHHHNHSHHNS) show a composition bias toward basic residues. Low complexity-rich tracts occupy residues 317-470 (NNIN…SPAS) and 478-489 (SNNFGGNHNNYN). Residues 490–504 (HAHHSHHNNHAHHNT) are compositionally biased toward basic residues. A compositionally biased stretch (low complexity) spans 505 to 553 (HNYNNNNNNNNNNNNNNNNNNNNSNNSNNNSNTNNNGNNGNNSNNNNNH). Positions 544–825 (GNNSNNNNNH…QNPGRFLNHD (282 aa)) form a DNA-binding region, NDT80. The span at 822–832 (LNHDKSLKKDP) shows a compositional bias: basic and acidic residues. Over residues 838–874 (GGKGGGGSGSGGMGGGMGGGMGNNGSSGSSSNGGYGN) the composition is skewed to gly residues. Low complexity-rich tracts occupy residues 898–946 (SPTT…PTLT) and 1148–1189 (QQQQ…SSIS). Positions 1240–1355 (SDQRIKSNIR…RSLKKEKDHI (116 aa)) constitute a Peptidase S74 domain. The next 3 membrane-spanning stretches (helical) occupy residues 1416–1436 (TMFV…FYLF), 1447–1467 (LMNF…TFYV), and 1473–1493 (LIIA…VGFF). Low complexity predominate over residues 1596–1605 (NSNNNINNNN). Disordered regions lie at residues 1596 to 1634 (NSNN…DFHE) and 1646 to 1665 (IKGK…SSSN). The span at 1617 to 1634 (FIDDFKKSSSNNHKDFHE) shows a compositional bias: basic and acidic residues.

The protein resides in the membrane. This is an uncharacterized protein from Dictyostelium discoideum (Social amoeba).